We begin with the raw amino-acid sequence, 425 residues long: Histidinol dehydrogenase (425 aa).

Tyrosine 124, glutamine 184, and asparagine 207 together coordinate NAD(+). Residues serine 230, glutamine 252, and histidine 255 each coordinate substrate. Zn(2+) contacts are provided by glutamine 252 and histidine 255. Active-site proton acceptor residues include glutamate 321 and histidine 322. Histidine 322, aspartate 355, glutamate 409, and histidine 414 together coordinate substrate. Aspartate 355 contacts Zn(2+). Residue histidine 414 participates in Zn(2+) binding.

Belongs to the histidinol dehydrogenase family. It depends on Zn(2+) as a cofactor.

It catalyses the reaction L-histidinol + 2 NAD(+) + H2O = L-histidine + 2 NADH + 3 H(+). Its pathway is amino-acid biosynthesis; L-histidine biosynthesis; L-histidine from 5-phospho-alpha-D-ribose 1-diphosphate: step 9/9. Catalyzes the sequential NAD-dependent oxidations of L-histidinol to L-histidinaldehyde and then to L-histidine. The protein is Histidinol dehydrogenase of Halobacterium salinarum (strain ATCC 700922 / JCM 11081 / NRC-1) (Halobacterium halobium).